A 768-amino-acid chain; its full sequence is P-selectin (768 aa).

An N-terminal signal peptide occupies residues 1–41 (MAGCPKGSWKPRLRSVVLGAAQLIWLSALISELVNRKKVAT). The Extracellular portion of the chain corresponds to 42–709 (WTYNYSTKAY…QAGTLTIQEA (668 aa)). N-linked (GlcNAc...) asparagine glycosylation is found at Asn45, Asn54, and Asn107. Residues 58-158 (AFCKRHFTDL…PCFKRKRALC (101 aa)) enclose the C-type lectin domain. Disulfide bonds link Cys60-Cys158, Cys131-Cys150, Cys168-Cys183, Cys185-Cys194, Cys200-Cys244, Cys230-Cys257, Cys262-Cys306, Cys292-Cys319, Cys324-Cys368, Cys354-Cys381, Cys386-Cys430, Cys416-Cys443, Cys448-Cys492, Cys478-Cys505, Cys510-Cys554, Cys540-Cys567, Cys580-Cys624, Cys610-Cys637, Cys642-Cys686, and Cys672-Cys699. Glu121, Asn123, and Asn124 together coordinate Ca(2+). A carbohydrate is bound at residue Asn123. A carbohydrate contacts are provided by Glu133 and Asn146. 2 residues coordinate Ca(2+): Asn146 and Asp147. Residues 159–195 (YTASCQDMSCNSQGERIETIGSYTCSCYPGFYGPECE) enclose the EGF-like domain. 8 Sushi domains span residues 198 to 259 (QECG…QCKA), 260 to 321 (VQCQ…TCEA), 322 to 383 (IACE…VCEA), 384 to 445 (LQCQ…ECQA), 446 to 507 (VSCT…MCEA), 508 to 569 (IKCP…TCKG), 578 to 639 (VRCP…VCRA), and 640 to 701 (VKCS…TCQA). N-linked (GlcNAc...) asparagine glycosylation is present at Asn212. Asn347 is a glycosylation site (N-linked (GlcNAc...) asparagine). The N-linked (GlcNAc...) asparagine glycan is linked to Asn456. A glycan (N-linked (GlcNAc...) asparagine) is linked at Asn603. N-linked (GlcNAc...) asparagine glycans are attached at residues Asn654, Asn661, and Asn679. A helical membrane pass occupies residues 710–733 (LTYLGGALASTSGLAVGGTLLALL). Topologically, residues 734–768 (RKRLRKKDDGKCPLNPHSHLGTYGVFTNAAYDPTP) are cytoplasmic. Cys745 carries the S-palmitoyl cysteine; alternate lipid modification. A lipid anchor (S-stearoyl cysteine; alternate) is attached at Cys745. Positions 756–759 (YGVF) match the Endocytosis signal motif. The interaction with SNX17 stretch occupies residues 759–768 (FTNAAYDPTP).

Belongs to the selectin/LECAM family. Interacts with SNX17. Interacts with SELPLG/PSGL1 and PODXL2 and mediates neutrophil adhesion and leukocyte rolling. This interaction requires the sialyl-Lewis X epitope of SELPLG and PODXL2, and specific tyrosine sulfation on SELPLG. Interacts (via C-type lectin domain) with alpha-IIb/beta3 integrin ITGA2B:ITGB3 and alpha-V/beta-3 integrin ITGAV:ITGB3. Interacts with alpha5/beta1 integrin ITGA5:ITGB1 and alpha4/beta1 integrin ITGA4:ITGB. In terms of tissue distribution, not detected in the absence of exposure to lipopolysaccharide (LPS). Detected only after exposure to lipopolysaccharide (LPS) in the tissues examined: spleen, lung, brain, liver, heart, kidney, thymus and small intestine.

The protein resides in the cell membrane. Its function is as follows. Ca(2+)-dependent receptor for myeloid cells that binds to carbohydrates on neutrophils and monocytes. Mediates the interaction of activated endothelial cells or platelets with leukocytes. The ligand recognized is sialyl-Lewis X. Mediates rapid rolling of leukocyte rolling over vascular surfaces during the initial steps in inflammation through interaction with SELPLG. Mediates cell-cell interactions and cell adhesion via the interaction with integrin alpha-IIb/beta3 (ITGA2B:ITGB3) and integrin alpha-V/beta-3 (ITGAV:ITGB3). The polypeptide is P-selectin (Selp) (Rattus norvegicus (Rat)).